The sequence spans 967 residues: Haze protective factor 1 (967 aa).

The first 23 residues, 1 to 23, serve as a signal peptide directing secretion; the sequence is MFNRFNKLQAALALVLYSQSALG. Asn-28 and Asn-35 each carry an N-linked (GlcNAc...) asparagine glycan. The segment at 72-301 is disordered; the sequence is SSSTEVSSSI…STSSASTASG (230 aa). Tandem repeats lie at residues 93–105, 106–118, 119–131, 132–144, 153–165, 166–178, 179–191, 192–204, and 205–217. The segment at 93-278 is 13 X approximate repeats, Ser-rich; that stretch reads SITSSGSSVS…QSGSSVSGSS (186 aa). One copy of the 1-10; approximate repeat lies at 218 to 230; that stretch reads SATESGSASSVPS. One copy of the 1-11; approximate repeat lies at 234–247; that stretch reads SVTESGSSSSASES. One copy of the 1-12; approximate repeat lies at 248–259; it reads SITQSGTASGSS. One copy of the 1-13 repeat lies at 266–278; it reads SVTQSGSSVSGSS. Residues Asn-493, Asn-601, and Asn-638 are each glycosylated (N-linked (GlcNAc...) asparagine). 4 consecutive repeat copies span residues 745–780, 781–815, 816–854, and 855–893. The segment at 745-902 is 4.5 X approximate tandem repeats, Thr-rich; that stretch reads SSKSYTTVTV…ASPKSYTTVT (158 aa). Positions 836 to 857 are disordered; that stretch reads KTVTSEAPKETSETSETSAAPK. The 2-5; truncated repeat unit spans residues 894–902; the sequence is SPKSYTTVT. Ala-946 carries the GPI-anchor amidated alanine lipid modification. The propeptide at 947–967 is removed in mature form; the sequence is AGLNANTLNALVGIFVLAFFN.

Belongs to the SRP1/TIP1 family. The GPI-anchor is attached to the protein in the endoplasmic reticulum and serves to target the protein to the cell surface. There, the glucosamine-inositol phospholipid moiety is cleaved off and the GPI-modified mannoprotein is covalently attached via its lipidless GPI glycan remnant to the 1,6-beta-glucan of the outer cell wall layer.

Its subcellular location is the secreted. It is found in the cell wall. It localises to the membrane. Functionally, involved in cell wall organization and biosynthesis. The polypeptide is Haze protective factor 1 (HPF1) (Saccharomyces cerevisiae (strain ATCC 204508 / S288c) (Baker's yeast)).